The following is a 227-amino-acid chain: MNGLRVAAKIQPARQTIIFLHGLGDTGSGWGFLAQYLQQRDPAAFQHTNFVFPNAPELHVTANGGALMPAWFDILEWDPSFSKVDSDGFMNSLNSIEKTVKQEIDKGIKPEQIIIGGFSQGAALALATSVTLPWKIGGIVALSGFCSIPGILKQHKNGINVKTPIFHGHGDMDPVVPIGLGIKAKQFYQDSCEIQNYEFKVYKGMAHSTVPDELEDLASFIKKSLSS.

Active-site charge relay system residues include serine 119, aspartate 173, and histidine 207.

Belongs to the AB hydrolase superfamily. AB hydrolase 2 family.

It is found in the cytoplasm. Its subcellular location is the nucleus. It catalyses the reaction S-hexadecanoyl-L-cysteinyl-[protein] + H2O = L-cysteinyl-[protein] + hexadecanoate + H(+). In terms of biological role, hydrolyzes fatty acids from S-acylated cysteine residues in proteins with a strong preference for palmitoylated G-alpha proteins over other acyl substrates. Mediates the deacylation of G-alpha proteins such as GPA1 in vivo, but has weak or no activity toward palmitoylated Ras proteins. Has weak lysophospholipase activity in vitro; however such activity may not exist in vivo. In Saccharomyces cerevisiae (strain ATCC 204508 / S288c) (Baker's yeast), this protein is Acyl-protein thioesterase 1.